Consider the following 124-residue polypeptide: UPF0337 protein blr1496 (124 aa).

It belongs to the UPF0337 (CsbD) family.

This is UPF0337 protein blr1496 from Bradyrhizobium diazoefficiens (strain JCM 10833 / BCRC 13528 / IAM 13628 / NBRC 14792 / USDA 110).